The primary structure comprises 653 residues: Alpha-L-iduronidase (653 aa).

Residues 1-27 (MRPLRPRAALLALLASLLAAPPVAPAE) form the signal peptide. Alpha-D-mannopyranose is bound by residues Pro-54, Leu-56, and His-58. His-91 is an alpha-L-iduronate binding site. Residue Asn-110 is glycosylated (N-linked (GlcNAc...) asparagine). Positions 181 and 182 each coordinate alpha-L-iduronate. The active-site Proton donor is Glu-182. An N-linked (GlcNAc...) asparagine glycan is attached at Asn-190. The alpha-L-iduronate site is built by Lys-264, Glu-299, and Gly-305. The active-site Nucleophile is Glu-299. Trp-306 lines the alpha-D-mannopyranose pocket. N-linked (GlcNAc...) asparagine glycosylation occurs at Asn-336. The alpha-L-iduronate site is built by Asp-349 and Arg-363. Residues Asn-372, Asn-415, and Asn-451 are each glycosylated (N-linked (GlcNAc...) asparagine). Residues Arg-488 and Arg-492 each coordinate alpha-D-mannopyranose. Arg-492 is a beta-D-mannose binding site. Cys-541 and Cys-577 form a disulfide bridge.

It belongs to the glycosyl hydrolase 39 family. As to quaternary structure, monomer. In terms of processing, N-glycosylation at Asn-372 contributes to substrate binding and is required for full enzymatic activity. Ubiquitous.

The protein resides in the lysosome. The enzyme catalyses Hydrolysis of unsulfated alpha-L-iduronosidic linkages in dermatan sulfate.. This is Alpha-L-iduronidase (IDUA) from Homo sapiens (Human).